The sequence spans 96 residues: ATP-dependent Clp protease adapter protein ClpS (96 aa).

This sequence belongs to the ClpS family. As to quaternary structure, binds to the N-terminal domain of the chaperone ClpA.

Involved in the modulation of the specificity of the ClpAP-mediated ATP-dependent protein degradation. In Campylobacter jejuni subsp. jejuni serotype O:6 (strain 81116 / NCTC 11828), this protein is ATP-dependent Clp protease adapter protein ClpS.